A 28-amino-acid polypeptide reads, in one-letter code: Expansin-B1 (28 aa).

An Expansin-like CBD domain is found at 11–28; sequence MLLSLQGPXSLRMVSESG.

The protein belongs to the expansin family. Expansin B subfamily.

It localises to the secreted. The protein resides in the cell wall. It is found in the membrane. May cause loosening and extension of plant cell walls by disrupting non-covalent bonding between cellulose microfibrils and matrix glucans. This Pseudotsuga menziesii (Douglas-fir) protein is Expansin-B1.